We begin with the raw amino-acid sequence, 810 residues long: Zinc finger transcription factor YRR1 (810 aa).

The tract at residues 1–47 (MKRRSDALLGSFQATNVTPPSDNSNSTAGGANGSNSGTPTSTSGKKR) is disordered. Over residues 12-22 (FQATNVTPPSD) the composition is skewed to polar residues. Positions 23-43 (NSNSTAGGANGSNSGTPTSTS) are enriched in low complexity. The segment at residues 54-82 (CGFCRRRKLRCDQQKPMCSTCISRNLTTC) is a DNA-binding region (zn(2)-C6 fungal-type). A disordered region spans residues 722–742 (ELDPQSDNPSSEAKIVSDRQR).

Its subcellular location is the cytoplasm. It is found in the nucleus. In terms of biological role, transcription factor involved in the regulation of multidrug resistance genes. Acts in concert with YRR1. This chain is Zinc finger transcription factor YRR1 (YRR1), found in Saccharomyces cerevisiae (strain ATCC 204508 / S288c) (Baker's yeast).